A 62-amino-acid polypeptide reads, in one-letter code: Conotoxin Pl168 (62 aa).

The signal sequence occupies residues 1–21 (MGMRMMFTVFLLVVLATTVVS). Residues 22-40 (FTLDRASDGANAAADLVAR) constitute a propeptide that is removed on maturation. 2 disulfide bridges follow: Cys-46–Cys-52 and Cys-47–Cys-61.

Belongs to the conotoxin A superfamily. Both Pro-53 and Pro-62 are not in cis/trans isomerization. As to expression, expressed by the venom duct.

Its subcellular location is the secreted. Functionally, probable neurotoxin with unknown target. Possibly targets ion channels. This chain is Conotoxin Pl168, found in Conus planorbis (Planorbis cone).